The following is a 200-amino-acid chain: MGRLHCTQDPVPEAVRGDMQQLNQLGAQQFSDLTEVLFHFLTEPKEVERFLAQLSEFATSNQISLGPLKSIMKSLLLVPNGALKKGLTAEQVRTDLQTLGLSEEKATYFSEKWKQNASTLAQWAMGQTLMVNQLIDMEWRFGVTSGSSELEKVGSIFLQLKLVVKKGKQTENLYMELTLPQFYSFLHEMERVRASMECLS.

In terms of domain architecture, COMM spans 133 to 200 (QLIDMEWRFG…RVRASMECLS (68 aa)).

This sequence belongs to the COMM domain-containing protein 7 family. Component of the commander complex consisting of the CCC subcomplex and the retriever subcomplex. Component of the CCC (COMMD/CCDC22/CCDC93) subcomplex consisting of COMMD1, COMMD2, COMMD3, COMMD4, COMMD5, COMMD6, COMMD7, COMMD8, COMMD9, COMMD10, CCDC22 and CCDC93; within the complex forms a heterodimer with COMMD9. Interacts with RELA. Interacts with CCDC22, CCDC93, SCNN1B, CUL7.

Its subcellular location is the cytoplasmic vesicle. Scaffold protein in the commander complex that is essential for endosomal recycling of transmembrane cargos; the commander complex is composed of the CCC subcomplex and the retriever subcomplex. May modulate activity of cullin-RING E3 ubiquitin ligase (CRL) complexes. Associates with the NF-kappa-B complex and suppresses its transcriptional activity. This is COMM domain-containing protein 7 (Commd7) from Mus musculus (Mouse).